A 254-amino-acid chain; its full sequence is Alcohol dehydrogenase (254 aa).

10–33 (FVAGLGGIGLDTSREIVKSGPKNL) provides a ligand contact to NAD(+). Ser-138 lines the substrate pocket. Residue Tyr-151 is the Proton acceptor of the active site.

This sequence belongs to the short-chain dehydrogenases/reductases (SDR) family. As to quaternary structure, homodimer.

It catalyses the reaction a primary alcohol + NAD(+) = an aldehyde + NADH + H(+). The enzyme catalyses a secondary alcohol + NAD(+) = a ketone + NADH + H(+). The chain is Alcohol dehydrogenase (Adh) from Drosophila grimshawi (Hawaiian fruit fly).